Consider the following 41-residue polypeptide: SPbeta prophage-derived uncharacterized protein YosF (41 aa).

The polypeptide is SPbeta prophage-derived uncharacterized protein YosF (yosF) (Bacillus subtilis (strain 168)).